The primary structure comprises 160 residues: SsrA-binding protein (160 aa).

The protein belongs to the SmpB family.

Its subcellular location is the cytoplasm. In terms of biological role, required for rescue of stalled ribosomes mediated by trans-translation. Binds to transfer-messenger RNA (tmRNA), required for stable association of tmRNA with ribosomes. tmRNA and SmpB together mimic tRNA shape, replacing the anticodon stem-loop with SmpB. tmRNA is encoded by the ssrA gene; the 2 termini fold to resemble tRNA(Ala) and it encodes a 'tag peptide', a short internal open reading frame. During trans-translation Ala-aminoacylated tmRNA acts like a tRNA, entering the A-site of stalled ribosomes, displacing the stalled mRNA. The ribosome then switches to translate the ORF on the tmRNA; the nascent peptide is terminated with the 'tag peptide' encoded by the tmRNA and targeted for degradation. The ribosome is freed to recommence translation, which seems to be the essential function of trans-translation. The sequence is that of SsrA-binding protein from Photorhabdus laumondii subsp. laumondii (strain DSM 15139 / CIP 105565 / TT01) (Photorhabdus luminescens subsp. laumondii).